Here is a 120-residue protein sequence, read N- to C-terminus: Large ribosomal subunit protein uL18 (120 aa).

It belongs to the universal ribosomal protein uL18 family. As to quaternary structure, part of the 50S ribosomal subunit; part of the 5S rRNA/L5/L18/L25 subcomplex. Contacts the 5S and 23S rRNAs.

Functionally, this is one of the proteins that bind and probably mediate the attachment of the 5S RNA into the large ribosomal subunit, where it forms part of the central protuberance. This Trichodesmium erythraeum (strain IMS101) protein is Large ribosomal subunit protein uL18.